We begin with the raw amino-acid sequence, 483 residues long: GDP-fucose protein O-fucosyltransferase 4 (483 aa).

Position 1 (Met-1) is a topological domain, cytoplasmic. The helical; Signal-anchor for type II membrane protein transmembrane segment at 2 to 21 threads the bilayer; that stretch reads ALCLWLFLVLPICCWCQGAV. Residues 22-483 are Lumenal-facing; the sequence is DLGDSGVFQP…RARGLSNDSR (462 aa). Residues Asn-151 and Asn-303 are each glycosylated (N-linked (GlcNAc...) asparagine). The cysteines at positions 374 and 377 are disulfide-linked. The tract at residues 387–425 is disordered; it reads RKAHRKNPKQNQPPQPKMANSSHMGCPLPSPGYGPVENV. 4 N-linked (GlcNAc...) asparagine glycosylation sites follow: Asn-406, Asn-428, Asn-456, and Asn-480.

Belongs to the glycosyltransferase 10 family.

The protein localises to the endoplasmic reticulum membrane. The enzyme catalyses L-threonyl-[protein] + GDP-beta-L-fucose = 3-O-(alpha-L-fucosyl)-L-threonyl-[protein] + GDP + H(+). It carries out the reaction L-seryl-[protein] + GDP-beta-L-fucose = 3-O-(alpha-L-fucosyl)-L-seryl-[protein] + GDP + H(+). The protein operates within protein modification; protein glycosylation. Functionally, protein O-fucosyltransferase that specifically catalyzes O-fucosylation of serine or threonine residues in EMI domains of target proteins. Attaches fucose through an O-glycosidic linkage. O-fucosylation of EMI domain-containing proteins may be required for facilitating protein folding and secretion. This chain is GDP-fucose protein O-fucosyltransferase 4 (fut11), found in Danio rerio (Zebrafish).